A 429-amino-acid polypeptide reads, in one-letter code: Histidine--tRNA ligase (429 aa).

The protein belongs to the class-II aminoacyl-tRNA synthetase family. As to quaternary structure, homodimer.

The protein resides in the cytoplasm. It carries out the reaction tRNA(His) + L-histidine + ATP = L-histidyl-tRNA(His) + AMP + diphosphate + H(+). This Pseudomonas paraeruginosa (strain DSM 24068 / PA7) (Pseudomonas aeruginosa (strain PA7)) protein is Histidine--tRNA ligase.